The chain runs to 433 residues: 23S rRNA (uracil(1939)-C(5))-methyltransferase RlmD (433 aa).

The TRAM domain occupies 10–68 (RTTTRQIITVSVNDLDSFGQGVARHNGKTLFIPGLLPQENAEVTVTEDKKQYARAKVVR). C81, C87, C90, and C162 together coordinate [4Fe-4S] cluster. S-adenosyl-L-methionine is bound by residues Q265, F294, N299, E315, N342, and D363. The active-site Nucleophile is the C389.

It belongs to the class I-like SAM-binding methyltransferase superfamily. RNA M5U methyltransferase family. RlmD subfamily.

It catalyses the reaction uridine(1939) in 23S rRNA + S-adenosyl-L-methionine = 5-methyluridine(1939) in 23S rRNA + S-adenosyl-L-homocysteine + H(+). Catalyzes the formation of 5-methyl-uridine at position 1939 (m5U1939) in 23S rRNA. This chain is 23S rRNA (uracil(1939)-C(5))-methyltransferase RlmD, found in Shigella sonnei (strain Ss046).